Consider the following 380-residue polypeptide: GATOR1 complex protein NPRL2 (380 aa).

Positions 1-133 (MGSSCRIECI…SKQKLVPIMT (133 aa)) are interaction with PDPK1. R78 contributes to the GDP binding site. Residue R78 is modified to Asymmetric dimethylarginine. Residues K158 and K357 each participate in a glycyl lysine isopeptide (Lys-Gly) (interchain with G-Cter in ubiquitin) cross-link.

This sequence belongs to the NPR2 family. Within the GATOR complex, component of the GATOR1 subcomplex, made of DEPDC5, NPRL2 and NPRL3. GATOR1 mediates the strong interaction of the GATOR complex with small GTPases Rag (RagA/RRAGA, RagB/RRAGB, RagC/RRAGC and/or RagD/RRAGD) heterodimers. GATOR1 interacts with GPR155/LYCHOS; interaction takes place in presence of cholesterol and prevents interaction between GATOR1 and KICSTOR. Interacts with PDPK1. In terms of processing, in the presence of abundant amino acids, ubiquitinated at Lys-158 and Lys-357 via 'Lys-6'-linked ubiquitination by the WDR24 component of the GATOR2 complex, thereby inhibiting the GATOR1 complex and promoting mTORC1 activation. Post-translationally, asymmetric dimethylation at Arg-78 by PRMT1 inhibits the GTPase activator activity of the GATOR1 complex and consequently inducing timely mTORC1 activation under methionine-sufficient conditions.

It localises to the lysosome membrane. Functionally, catalytic component of the GATOR1 complex, a multiprotein complex that functions as an inhibitor of the amino acid-sensing branch of the mTORC1 pathway. In response to amino acid depletion, the GATOR1 complex has GTPase activating protein (GAP) activity and strongly increases GTP hydrolysis by RagA/RRAGA (or RagB/RRAGB) within heterodimeric Rag complexes, thereby turning them into their inactive GDP-bound form, releasing mTORC1 from lysosomal surface and inhibiting mTORC1 signaling. In the presence of abundant amino acids, the GATOR1 complex is ubiquitinated and inhibited by GATOR2. Within the GATOR1 complex, NPRL2 constitutes the catalytic subunit that mediates the GTPase activator activity and under methionine-sufficient conditions, the GTPase activator activity is inhibited by PRMT1 through methylation and consequently inducing timely mTORC1 activation. In terms of biological role, suppresses Src-dependent tyrosine phosphorylation and activation of PDPK1 and its downstream signaling. Down-regulates PDPK1 kinase activity by interfering with tyrosine phosphorylation at 'Tyr-9', 'Tyr-373' and 'Tyr-376' residues. May act as a tumor suppressor. Suppresses cell growth and enhances sensitivity to various anticancer drugs. This chain is GATOR1 complex protein NPRL2, found in Mus musculus (Mouse).